The primary structure comprises 62 residues: Conotoxin Mi5.2 (62 aa).

Positions 1 to 19 are cleaved as a signal peptide; the sequence is MRCVPVFIILLLLIPSASS. Positions 20–50 are excised as a propeptide; the sequence is VDVQPLTRDDVPLASFLDDARRTLRSPWMTR.

Belongs to the conotoxin T superfamily. Post-translationally, contains 2 disulfide bonds that can be either 'C1-C3, C2-C4' or 'C1-C4, C2-C3', since these disulfide connectivities have been observed for conotoxins with cysteine framework V (for examples, see AC P0DQQ7 and AC P81755). As to expression, expressed by the venom duct.

It is found in the secreted. This Conus miles (Soldier cone) protein is Conotoxin Mi5.2.